The sequence spans 529 residues: Bifunctional purine biosynthesis protein PurH (529 aa).

One can recognise an MGS-like domain in the interval 1–148 (MQQRRPVRRA…KNHKDVAIVV (148 aa)). The residue at position 287 (Lys-287) is an N6-acetyllysine.

Belongs to the PurH family.

The enzyme catalyses (6R)-10-formyltetrahydrofolate + 5-amino-1-(5-phospho-beta-D-ribosyl)imidazole-4-carboxamide = 5-formamido-1-(5-phospho-D-ribosyl)imidazole-4-carboxamide + (6S)-5,6,7,8-tetrahydrofolate. It carries out the reaction IMP + H2O = 5-formamido-1-(5-phospho-D-ribosyl)imidazole-4-carboxamide. It participates in purine metabolism; IMP biosynthesis via de novo pathway; 5-formamido-1-(5-phospho-D-ribosyl)imidazole-4-carboxamide from 5-amino-1-(5-phospho-D-ribosyl)imidazole-4-carboxamide (10-formyl THF route): step 1/1. It functions in the pathway purine metabolism; IMP biosynthesis via de novo pathway; IMP from 5-formamido-1-(5-phospho-D-ribosyl)imidazole-4-carboxamide: step 1/1. The chain is Bifunctional purine biosynthesis protein PurH from Escherichia coli O157:H7.